The primary structure comprises 247 residues: Agamous-like MADS-box protein AGL28 (247 aa).

One can recognise an MADS-box domain in the interval 6 to 66; the sequence is LGRRKIELVK…GKAYSFGHPN (61 aa). The stretch at 91 to 168 forms a coiled coil; sequence TKLRIQMLNE…VDEKVAQLHH (78 aa).

In terms of tissue distribution, expressed in roots, leaves and shoot apices.

It localises to the nucleus. Functionally, probable transcription factor that may function as a floral promoter operating upstream of known floral activators in the autonomous pathway. This chain is Agamous-like MADS-box protein AGL28, found in Arabidopsis thaliana (Mouse-ear cress).